The following is a 125-amino-acid chain: S-adenosylmethionine decarboxylase proenzyme (125 aa).

Ser-61 acts as the Schiff-base intermediate with substrate; via pyruvic acid in catalysis. Ser-61 carries the post-translational modification Pyruvic acid (Ser); by autocatalysis. His-66 functions as the Proton acceptor; for processing activity in the catalytic mechanism. The Proton donor; for catalytic activity role is filled by Cys-81.

The protein belongs to the prokaryotic AdoMetDC family. Type 1 subfamily. As to quaternary structure, heterotetramer of two alpha and two beta chains arranged as a dimer of alpha/beta heterodimers. The cofactor is pyruvate. Post-translationally, is synthesized initially as an inactive proenzyme. Formation of the active enzyme involves a self-maturation process in which the active site pyruvoyl group is generated from an internal serine residue via an autocatalytic post-translational modification. Two non-identical subunits are generated from the proenzyme in this reaction, and the pyruvate is formed at the N-terminus of the alpha chain, which is derived from the carboxyl end of the proenzyme. The post-translation cleavage follows an unusual pathway, termed non-hydrolytic serinolysis, in which the side chain hydroxyl group of the serine supplies its oxygen atom to form the C-terminus of the beta chain, while the remainder of the serine residue undergoes an oxidative deamination to produce ammonia and the pyruvoyl group blocking the N-terminus of the alpha chain.

It carries out the reaction S-adenosyl-L-methionine + H(+) = S-adenosyl 3-(methylsulfanyl)propylamine + CO2. The protein operates within amine and polyamine biosynthesis; S-adenosylmethioninamine biosynthesis; S-adenosylmethioninamine from S-adenosyl-L-methionine: step 1/1. Catalyzes the decarboxylation of S-adenosylmethionine to S-adenosylmethioninamine (dcAdoMet), the propylamine donor required for the synthesis of the polyamines spermine and spermidine from the diamine putrescine. In Prochlorococcus marinus (strain MIT 9313), this protein is S-adenosylmethionine decarboxylase proenzyme.